Consider the following 558-residue polypeptide: Serine/threonine-protein phosphatase 2B catalytic subunit (558 aa).

Fe cation is bound by residues Asp128, His130, and Asp156. 2 residues coordinate Zn(2+): Asp156 and Asn188. His189 serves as the catalytic Proton donor. The Zn(2+) site is built by His237 and His319. Disordered regions lie at residues 415–439 (LRED…NQDP) and 534–558 (ALER…LSTS). Positions 420-435 (ATTSPGSASPALPSAA) are enriched in low complexity. Positions 534-548 (ALERATREADNDKKL) are enriched in basic and acidic residues. Polar residues predominate over residues 549 to 558 (QTLSRRLSTS).

This sequence belongs to the PPP phosphatase family. PP-2B subfamily. In terms of assembly, composed of two components (A and B), the A component is the catalytic subunit and the B component confers calcium sensitivity. The cofactor is Fe(3+). Zn(2+) is required as a cofactor.

The catalysed reaction is O-phospho-L-seryl-[protein] + H2O = L-seryl-[protein] + phosphate. The enzyme catalyses O-phospho-L-threonyl-[protein] + H2O = L-threonyl-[protein] + phosphate. Functionally, calcium-dependent, calmodulin-stimulated protein phosphatase. This subunit may have a role in the calmodulin activation of calcineurin. The protein is Serine/threonine-protein phosphatase 2B catalytic subunit (cna-1) of Neurospora crassa (strain ATCC 24698 / 74-OR23-1A / CBS 708.71 / DSM 1257 / FGSC 987).